Reading from the N-terminus, the 407-residue chain is Zinc finger protein 260 (407 aa).

Residues methionine 1–lysine 21 are disordered. Basic and acidic residues predominate over residues glutamate 10 to lysine 21. The C2H2-type 1 zinc finger occupies tyrosine 23–histidine 45. A C2H2-type 2; degenerate zinc finger spans residues proline 51–arginine 73. 11 C2H2-type zinc fingers span residues tyrosine 79–histidine 101, tyrosine 131–histidine 153, phenylalanine 159–histidine 181, phenylalanine 187–histidine 209, tyrosine 215–histidine 237, tyrosine 243–histidine 265, tyrosine 271–histidine 293, tyrosine 299–histidine 321, tyrosine 327–histidine 349, tyrosine 355–histidine 377, and tyrosine 383–histidine 405.

Belongs to the krueppel C2H2-type zinc-finger protein family. In terms of assembly, binds DNA. Interacts with GATA4. Expressed in both embryonic, fetal and adult heart. Also expressed in lung, skeletal muscle and adrenal glands.

It localises to the nucleus. Functionally, transcription factor that acts as a cardiac regulator and an effector of alpha1-adrenergic signaling. Binds to PE response elements (PERE) present in the promoter of genes such as ANF/NPPA and acts as a direct transcriptional activator of NPPA. Also acts as a cofactor with GATA4, a key cardiac regulator. The chain is Zinc finger protein 260 (Znf260) from Rattus norvegicus (Rat).